The chain runs to 212 residues: Interleukin-6 (212 aa).

A signal peptide spans Met-1–Pro-29. The cysteines at positions 72 and 78 are disulfide-linked. Asn-73 is a glycosylation site (N-linked (GlcNAc...) asparagine). A Phosphoserine; by FAM20C modification is found at Ser-81. An intrachain disulfide couples Cys-101 to Cys-111.

The protein belongs to the IL-6 superfamily. Component of a hexamer of two molecules each of IL6, IL6R and IL6ST; first binds to IL6R to associate with the signaling subunit IL6ST. Interacts with IL6R (via the N-terminal ectodomain); this interaction may be affected by IL6R-binding with SORL1, hence decreasing IL6 cis signaling. Interacts with SORL1 (via the N-terminal ectodomain); this interaction leads to IL6 internalization and lysosomal degradation. May form a trimeric complex with the soluble SORL1 ectodomain and soluble IL6R receptor; this interaction might stabilize circulating IL6, hence promoting IL6 trans signaling. Post-translationally, N- and O-glycosylated. In terms of tissue distribution, produced by skeletal muscle.

Its subcellular location is the secreted. In terms of biological role, cytokine with a wide variety of biological functions in immunity, tissue regeneration, and metabolism. Binds to IL6R, then the complex associates to the signaling subunit IL6ST/gp130 to trigger the intracellular IL6-signaling pathway. The interaction with the membrane-bound IL6R and IL6ST stimulates 'classic signaling', whereas the binding of IL6 and soluble IL6R to IL6ST stimulates 'trans-signaling'. Alternatively, 'cluster signaling' occurs when membrane-bound IL6:IL6R complexes on transmitter cells activate IL6ST receptors on neighboring receiver cells. Its function is as follows. IL6 is a potent inducer of the acute phase response. Rapid production of IL6 contributes to host defense during infection and tissue injury, but excessive IL6 synthesis is involved in disease pathology. In the innate immune response, is synthesized by myeloid cells, such as macrophages and dendritic cells, upon recognition of pathogens through toll-like receptors (TLRs) at the site of infection or tissue injury. In the adaptive immune response, is required for the differentiation of B cells into immunoglobulin-secreting cells. Plays a major role in the differentiation of CD4(+) T cell subsets. Essential factor for the development of T follicular helper (Tfh) cells that are required for the induction of germinal-center formation. Required to drive naive CD4(+) T cells to the Th17 lineage. Also required for proliferation of myeloma cells and the survival of plasmablast cells. Acts as an essential factor in bone homeostasis and on vessels directly or indirectly by induction of VEGF, resulting in increased angiogenesis activity and vascular permeability. Induces, through 'trans-signaling' and synergistically with IL1B and TNF, the production of VEGF. Involved in metabolic controls, is discharged into the bloodstream after muscle contraction increasing lipolysis and improving insulin resistance. 'Trans-signaling' in central nervous system also regulates energy and glucose homeostasis. Mediates, through GLP-1, crosstalk between insulin-sensitive tissues, intestinal L cells and pancreatic islets to adapt to changes in insulin demand. Also acts as a myokine. Plays a protective role during liver injury, being required for maintenance of tissue regeneration. Also has a pivotal role in iron metabolism by regulating HAMP/hepcidin expression upon inflammation or bacterial infection. Through activation of IL6ST-YAP-NOTCH pathway, induces inflammation-induced epithelial regeneration. The protein is Interleukin-6 of Homo sapiens (Human).